A 271-amino-acid polypeptide reads, in one-letter code: D-methionine-binding lipoprotein MetQ (271 aa).

Positions 1-22 (MAFKFKTFAAVGALIGSLALVG) are cleaved as a signal peptide. Residue C23 is the site of N-palmitoyl cysteine attachment. A lipid anchor (S-diacylglycerol cysteine) is attached at C23.

It belongs to the NlpA lipoprotein family.

Its subcellular location is the cell membrane. In terms of biological role, this protein is a component of a D-methionine permease, a binding protein-dependent, ATP-driven transport system. The sequence is that of D-methionine-binding lipoprotein MetQ (metQ) from Escherichia coli (strain K12).